A 349-amino-acid polypeptide reads, in one-letter code: L-lactate dehydrogenase (349 aa).

Residues 199–219 (APEGSIIGADGNPTTDASTMF) form a disordered region.

This sequence belongs to the LDH2/MDH2 oxidoreductase family.

The protein localises to the cytoplasm. It carries out the reaction (S)-lactate + NAD(+) = pyruvate + NADH + H(+). It functions in the pathway fermentation; pyruvate fermentation to lactate; (S)-lactate from pyruvate: step 1/1. In Cupriavidus necator (strain ATCC 17699 / DSM 428 / KCTC 22496 / NCIMB 10442 / H16 / Stanier 337) (Ralstonia eutropha), this protein is L-lactate dehydrogenase (ldh).